The following is a 133-amino-acid chain: NADPH-dependent 7-cyano-7-deazaguanine reductase (133 aa).

Cysteine 49 (thioimide intermediate) is an active-site residue. Aspartate 56 serves as the catalytic Proton donor. Substrate is bound by residues isoleucine 71–leucine 73 and histidine 90–glutamate 91.

The protein belongs to the GTP cyclohydrolase I family. QueF type 1 subfamily.

The protein localises to the cytoplasm. The catalysed reaction is 7-aminomethyl-7-carbaguanine + 2 NADP(+) = 7-cyano-7-deazaguanine + 2 NADPH + 3 H(+). Its pathway is tRNA modification; tRNA-queuosine biosynthesis. Its function is as follows. Catalyzes the NADPH-dependent reduction of 7-cyano-7-deazaguanine (preQ0) to 7-aminomethyl-7-deazaguanine (preQ1). The protein is NADPH-dependent 7-cyano-7-deazaguanine reductase of Leptospira borgpetersenii serovar Hardjo-bovis (strain JB197).